The sequence spans 335 residues: Leukocyte cell-derived chemotaxin 1 (335 aa).

A helical transmembrane segment spans residues 45–65 (VVLISGAVLLLLGAIGAFYFW). The 98-residue stretch at 104 to 201 (GSGAEEAVEV…LCGDLPIFWL (98 aa)) folds into the BRICHOS domain. A disulfide bridge links cysteine 131 with cysteine 193. Positions 211 to 214 (RERR) are excised as a propeptide. Positions 221–269 (VTTTTTRRLRSGPQGTPAPGRPNNGTRPSVQEDAEPFNPDNPYHQQEGE) are disordered. Threonine 223 carries N-linked (GlcNAc...) asparagine; in variant 223-N-E-224 glycosylation. Residue threonine 236 is glycosylated (O-linked (GalNAc...) threonine; partial). Asparagine 244 carries N-linked (GlcNAc...) asparagine glycosylation. 4 disulfide bridges follow: cysteine 283–cysteine 287, cysteine 284–cysteine 324, cysteine 294–cysteine 318, and cysteine 298–cysteine 314.

Belongs to the chondromodulin-1 family. After cleavage, the post-translationally modified ChM-I is secreted as a glycoprotein. Post-translationally, two other smaller nonglycosylated chondromodulin forms (9 kDa and 7 kDa) are found either in developing articular cartilage or in chondrocytes. The 9 kDa form could be processed by an extracellular matrix-associated protease as a metalloproteinase and the 7 kDa form could be processed intracellularly. As to expression, nasal and articular cartilage, and fetal epiphysis.

Its subcellular location is the secreted. It localises to the extracellular space. The protein resides in the extracellular matrix. It is found in the endomembrane system. In terms of biological role, bifunctional growth regulator that stimulates the growth of cultured chondrocytes in the presence of basic fibroblast growth factor (FGF) but inhibits the growth of cultured vascular endothelial cells. May contribute to the rapid growth of cartilage and vascular invasion prior to the replacement of cartilage by bone during endochondral bone development. Inhibits in vitro tube formation and mobilization of endothelial cells. Plays a role as antiangiogenic factor in cardiac valves to suppress neovascularization. The protein is Leukocyte cell-derived chemotaxin 1 of Bos taurus (Bovine).